Reading from the N-terminus, the 113-residue chain is MSEEPKKIDIKGKGRAIEDLIPDIDDEEDDVDFQDLSSSGESDDSDDSMQEDYDDIHDEEPEDYSAIDPTNIMCSTRTRRKKIDFTKVLEEGQNEDDFEEEDEDYIPPQDKTM.

Residues 1–18 (MSEEPKKIDIKGKGRAIE) are compositionally biased toward basic and acidic residues. 2 disordered regions span residues 1-71 (MSEE…DPTN) and 83-113 (IDFTKVLEEGQNEDDFEEEDEDYIPPQDKTM). Acidic residues-rich tracts occupy residues 20–33 (LIPDIDDEEDDVDF), 41–65 (ESDDSDDSMQEDYDDIHDEEPEDYS), and 92–105 (GQNEDDFEEEDEDY).

This sequence belongs to the CHZ1 family. As to quaternary structure, forms a heterotrimer with H2A.Z-H2B, stabilizing the association of the histone dimer.

The protein localises to the cytoplasm. Its subcellular location is the nucleus. Forms a chaperone-bound H2A.Z-H2B complex that acts as a source for SWR1 complex-dependent H2A to H2A.Z histone replacement in chromatin. This is Histone H2A.Z-specific chaperone chz1 (chz1) from Schizosaccharomyces pombe (strain 972 / ATCC 24843) (Fission yeast).